We begin with the raw amino-acid sequence, 1139 residues long: Retinoblastoma-like protein 2 (1139 aa).

The segment at 1-45 (MPSGGDQSPPPPPPPPAAAASDEEEEDDGEAEDAAPPAESPTPQI) is disordered. The segment covering 8-17 (SPPPPPPPPA) has biased composition (pro residues). The segment covering 21 to 33 (SDEEEEDDGEAED) has biased composition (acidic residues). Phosphoserine is present on S413. The residue at position 417 (T417) is a Phosphothreonine. The domain A stretch occupies residues 417–616 (TPVSTATHSL…EKIRDNENRV (200 aa)). Residues 417-1024 (TPVSTATHSL…KQIKTFAMKY (608 aa)) form a pocket; binds E1A region. S420 carries an O-linked (GlcNAc) serine glycan. The tract at residues 617–827 (PTCEEVMPPQ…KQGQSVTSSS (211 aa)) is spacer. Phosphoserine is present on S639. At T642 the chain carries Phosphothreonine. The interval 654–678 (GGLGRSITSPTTLYDRYSSPPASTT) is disordered. 3 positions are modified to phosphoserine: S662, S672, and S688. Positions 810–827 (ISPGGQQQKQGQSVTSSS) are enriched in low complexity. Disordered regions lie at residues 810-831 (ISPG…NRPR) and 933-999 (KGKR…DMEE). A domain B region spans residues 828–1024 (NRPRKTSSLS…KQIKTFAMKY (197 aa)). The span at 941 to 955 (SGSSDSRSHQNSPTE) shows a compositional bias: polar residues. Residues S948, S952, S966, S971, S972, and S973 each carry the phosphoserine modification. Residues 964–973 (DSSPVMRSSS) show a composition bias toward low complexity. Phosphothreonine is present on T974. Residues 977-987 (VPQPSSAPPTP) show a composition bias toward pro residues. Phosphoserine is present on residues S981 and S982. T986 bears the Phosphothreonine mark. A phosphoserine mark is found at S1035, S1068, S1080, and S1112.

This sequence belongs to the retinoblastoma protein (RB) family. As to quaternary structure, interacts with AATF. Interacts with KMT5B, KMT5C and USP4. Component of the DREAM complex (also named LINC complex) at least composed of E2F4, E2F5, LIN9, LIN37, LIN52, LIN54, MYBL1, MYBL2, RBL1, RBL2, RBBP4, TFDP1 and TFDP2. The complex exists in quiescent cells where it represses cell cycle-dependent genes. It dissociates in S phase when LIN9, LIN37, LIN52 and LIN54 form a subcomplex that binds to MYBL2. Interacts with RINT1. Interacts with PML (isoform PML-1, isoform PML-2, isoform PML-3, isoform PML-4 and isoform PML-5). Interacts with RBBP9. Interacts with CD53. In terms of assembly, (Microbial infection) Interacts with JC virus small t antigen. During G0 and early G1 phase of the cell cycle, phosphorylated on Ser-639 and on 5 sites within the domain B. Phosphorylation on Ser-672 in G1 leads to its ubiquitin-dependent proteolysis.

It is found in the nucleus. In terms of biological role, key regulator of entry into cell division. Directly involved in heterochromatin formation by maintaining overall chromatin structure and, in particular, that of constitutive heterochromatin by stabilizing histone methylation. Recruits and targets histone methyltransferases KMT5B and KMT5C, leading to epigenetic transcriptional repression. Controls histone H4 'Lys-20' trimethylation. Probably acts as a transcription repressor by recruiting chromatin-modifying enzymes to promoters. Potent inhibitor of E2F-mediated trans-activation, associates preferentially with E2F5. Binds to cyclins A and E. Binds to and may be involved in the transforming capacity of the adenovirus E1A protein. May act as a tumor suppressor. This chain is Retinoblastoma-like protein 2 (RBL2), found in Homo sapiens (Human).